Consider the following 215-residue polypeptide: ATP-dependent Clp protease proteolytic subunit (215 aa).

Residue serine 116 is the Nucleophile of the active site. Residue histidine 141 is part of the active site.

This sequence belongs to the peptidase S14 family. Fourteen ClpP subunits assemble into 2 heptameric rings which stack back to back to give a disk-like structure with a central cavity, resembling the structure of eukaryotic proteasomes.

It is found in the cytoplasm. The catalysed reaction is Hydrolysis of proteins to small peptides in the presence of ATP and magnesium. alpha-casein is the usual test substrate. In the absence of ATP, only oligopeptides shorter than five residues are hydrolyzed (such as succinyl-Leu-Tyr-|-NHMec, and Leu-Tyr-Leu-|-Tyr-Trp, in which cleavage of the -Tyr-|-Leu- and -Tyr-|-Trp bonds also occurs).. Cleaves peptides in various proteins in a process that requires ATP hydrolysis. Has a chymotrypsin-like activity. Plays a major role in the degradation of misfolded proteins. The sequence is that of ATP-dependent Clp protease proteolytic subunit from Psychrobacter cryohalolentis (strain ATCC BAA-1226 / DSM 17306 / VKM B-2378 / K5).